A 68-amino-acid chain; its full sequence is Conotoxin tx3b (68 aa).

Positions 1 to 19 are cleaved as a signal peptide; it reads MSKLGALLTICLLLFSLTA. Positions 20–52 are excised as a propeptide; that stretch reads VPLDGDQHADQPAQRLQDRIPTEDHPLFDPNKR. Cystine bridges form between Cys53–Cys67, Cys54–Cys63, and Cys59–Cys66. A Methionine sulfoxide; partial modification is found at Met61. Cys67 carries the post-translational modification Cysteine amide.

As to expression, expressed by the venom duct.

The protein resides in the secreted. Functionally, intracranial injection into mice causes scratching, hyperactivity and circular motion. The protein is Conotoxin tx3b of Conus textile (Cloth-of-gold cone).